Reading from the N-terminus, the 101-residue chain is Urease subunit beta (101 aa).

It belongs to the urease beta subunit family. As to quaternary structure, heterotrimer of UreA (gamma), UreB (beta) and UreC (alpha) subunits. Three heterotrimers associate to form the active enzyme.

The protein resides in the cytoplasm. The enzyme catalyses urea + 2 H2O + H(+) = hydrogencarbonate + 2 NH4(+). It functions in the pathway nitrogen metabolism; urea degradation; CO(2) and NH(3) from urea (urease route): step 1/1. This Chelativorans sp. (strain BNC1) protein is Urease subunit beta.